The chain runs to 118 residues: Large ribosomal subunit protein bL20 (118 aa).

The protein belongs to the bacterial ribosomal protein bL20 family.

Binds directly to 23S ribosomal RNA and is necessary for the in vitro assembly process of the 50S ribosomal subunit. It is not involved in the protein synthesizing functions of that subunit. This chain is Large ribosomal subunit protein bL20, found in Trichodesmium erythraeum (strain IMS101).